A 629-amino-acid polypeptide reads, in one-letter code: 1-deoxy-D-xylulose-5-phosphate synthase (629 aa).

Residues H78 and 119–121 (AHS) contribute to the thiamine diphosphate site. D150 contributes to the Mg(2+) binding site. Thiamine diphosphate is bound by residues 151–152 (GA), N179, Y286, and E368. N179 contributes to the Mg(2+) binding site.

Belongs to the transketolase family. DXPS subfamily. As to quaternary structure, homodimer. The cofactor is Mg(2+). It depends on thiamine diphosphate as a cofactor.

It catalyses the reaction D-glyceraldehyde 3-phosphate + pyruvate + H(+) = 1-deoxy-D-xylulose 5-phosphate + CO2. It functions in the pathway metabolic intermediate biosynthesis; 1-deoxy-D-xylulose 5-phosphate biosynthesis; 1-deoxy-D-xylulose 5-phosphate from D-glyceraldehyde 3-phosphate and pyruvate: step 1/1. Functionally, catalyzes the acyloin condensation reaction between C atoms 2 and 3 of pyruvate and glyceraldehyde 3-phosphate to yield 1-deoxy-D-xylulose-5-phosphate (DXP). The chain is 1-deoxy-D-xylulose-5-phosphate synthase from Acidovorax sp. (strain JS42).